The sequence spans 409 residues: Fructose-1,6-bisphosphatase, chloroplastic (409 aa).

A chloroplast-targeting transit peptide spans 1–49; sequence MAAATTTTSRPLLLSRQQAAASSLQCRLPRRPGSSLFAGQGQASTPNVR. Mg(2+) contacts are provided by Glu-131, Glu-160, Asp-181, Leu-183, and Asp-184. 184–187 is a substrate binding site; sequence DGSS. The cysteines at positions 223 and 228 are disulfide-linked. Substrate contacts are provided by Asn-287, Tyr-319, Tyr-337, Tyr-339, and Lys-349. Glu-355 serves as a coordination point for Mg(2+).

This sequence belongs to the FBPase class 1 family. In terms of assembly, homotetramer. The cofactor is Mg(2+). In terms of tissue distribution, in photosynthetically active tissues, and in the shoot and root apical meristems.

The protein resides in the plastid. Its subcellular location is the chloroplast. It carries out the reaction beta-D-fructose 1,6-bisphosphate + H2O = beta-D-fructose 6-phosphate + phosphate. It participates in carbohydrate biosynthesis; Calvin cycle. This Triticum aestivum (Wheat) protein is Fructose-1,6-bisphosphatase, chloroplastic (FBP).